A 348-amino-acid polypeptide reads, in one-letter code: Fasciculation and elongation protein zeta-2 (348 aa).

The disordered stretch occupies residues 11–40 (YEFQEPAGSVQEQENCNASPEAGAGAHAGG). Residues S130, S171, and S190 each carry the phosphoserine modification. A coiled-coil region spans residues 206–280 (ERVKRLSVSE…TAKKKKKLKS (75 aa)). Positions 265–296 (QKEHKETAKKKKKLKSGSSQNGRSERSHMPGT) are disordered.

It belongs to the zygin family. In terms of assembly, homodimer; disulfide-linked. May form heterodimers with FEZ1. Interacts with synaptotagmin.

Its function is as follows. Involved in axonal outgrowth and fasciculation. This is Fasciculation and elongation protein zeta-2 (Fez2) from Mus musculus (Mouse).